Here is a 314-residue protein sequence, read N- to C-terminus: Acetaldehyde dehydrogenase (314 aa).

Residue 15 to 18 (SGNI) coordinates NAD(+). Cysteine 133 acts as the Acyl-thioester intermediate in catalysis. NAD(+) contacts are provided by residues 164 to 172 (SAGPGTRAN) and asparagine 292.

The protein belongs to the acetaldehyde dehydrogenase family.

The enzyme catalyses acetaldehyde + NAD(+) + CoA = acetyl-CoA + NADH + H(+). This is Acetaldehyde dehydrogenase from Paraburkholderia phytofirmans (strain DSM 17436 / LMG 22146 / PsJN) (Burkholderia phytofirmans).